Here is a 409-residue protein sequence, read N- to C-terminus: Broad specificity amino-acid racemase (409 aa).

An N-terminal signal peptide occupies residues 1–23; that stretch reads MPFSRTLLALSLGMALLQNPAFA. The cysteines at positions 70 and 96 are disulfide-linked. Residue Lys-74 is the Proton acceptor of the active site. Lys-74 is subject to N6-(pyridoxal phosphate)lysine. Residue Arg-173 coordinates substrate. Tyr-300 acts as the Proton acceptor in catalysis. Met-348 contacts substrate.

Belongs to the alanine racemase family. Bsr subfamily. In terms of assembly, homodimer. The cofactor is pyridoxal 5'-phosphate.

It is found in the periplasm. The enzyme catalyses an L-alpha-amino acid = a D-alpha-amino acid. It catalyses the reaction L-lysine = D-lysine. It carries out the reaction L-arginine = D-arginine. The catalysed reaction is L-ornithine = D-ornithine. The enzyme catalyses L-alanine = D-alanine. It catalyses the reaction L-methionine = D-methionine. In terms of biological role, amino-acid racemase able to utilize a broad range of substrates. Is mostly active with lysine and arginine and, to a lesser extent, with ornithine, whereas is about 10 times less active with alanine, methionine and ethionine. With phenylalanine as substrate only a trace activity is detectable, and is inactive with glutamate. Plays a key role in the catabolism of D-arginine and D-lysine, that allows P.taetrolens strain NBRC 3460 to grow on these basic D-amino acids as a sole carbon source. The sequence is that of Broad specificity amino-acid racemase from Pseudomonas taetrolens.